A 447-amino-acid chain; its full sequence is UPF0210 protein LSL_0162 (447 aa).

The protein belongs to the UPF0210 family. Homodimer.

This Ligilactobacillus salivarius (strain UCC118) (Lactobacillus salivarius) protein is UPF0210 protein LSL_0162.